The primary structure comprises 380 residues: Queuine tRNA-ribosyltransferase (380 aa).

The Proton acceptor role is filled by D96. Residues D96–F100, D150, Q193, and G220 contribute to the substrate site. The RNA binding stretch occupies residues G251–S257. Catalysis depends on D270, which acts as the Nucleophile. The tract at residues T275 to R279 is RNA binding; important for wobble base 34 recognition. Residues C308, C310, C313, and H339 each coordinate Zn(2+).

Belongs to the queuine tRNA-ribosyltransferase family. In terms of assembly, homodimer. Within each dimer, one monomer is responsible for RNA recognition and catalysis, while the other monomer binds to the replacement base PreQ1. Requires Zn(2+) as cofactor.

The enzyme catalyses 7-aminomethyl-7-carbaguanine + guanosine(34) in tRNA = 7-aminomethyl-7-carbaguanosine(34) in tRNA + guanine. The protein operates within tRNA modification; tRNA-queuosine biosynthesis. Catalyzes the base-exchange of a guanine (G) residue with the queuine precursor 7-aminomethyl-7-deazaguanine (PreQ1) at position 34 (anticodon wobble position) in tRNAs with GU(N) anticodons (tRNA-Asp, -Asn, -His and -Tyr). Catalysis occurs through a double-displacement mechanism. The nucleophile active site attacks the C1' of nucleotide 34 to detach the guanine base from the RNA, forming a covalent enzyme-RNA intermediate. The proton acceptor active site deprotonates the incoming PreQ1, allowing a nucleophilic attack on the C1' of the ribose to form the product. After dissociation, two additional enzymatic reactions on the tRNA convert PreQ1 to queuine (Q), resulting in the hypermodified nucleoside queuosine (7-(((4,5-cis-dihydroxy-2-cyclopenten-1-yl)amino)methyl)-7-deazaguanosine). This Streptococcus pneumoniae (strain P1031) protein is Queuine tRNA-ribosyltransferase.